The chain runs to 183 residues: MSTTIQNISLSGRKKQVSNKEMTFLESLYLVAIVKGLLITIKHFFRKKVTIHYPEQVREMSPVYRGQHMLKRDEQGRENCTACGLCALSCPAEAITMKAAERKSNEKHLYREEKYAEIYEINMLRCIFCGLCEEACPKDAIYLTTSKVLVPSNYERENFIFGKDKLVMPLDIAMQNAQLKNAN.

4Fe-4S ferredoxin-type domains are found at residues 71–100 and 117–146; these read KRDEQGRENCTACGLCALSCPAEAITMKAA and EIYEINMLRCIFCGLCEEACPKDAIYLTTS. Positions 80, 83, 86, 90, 126, 129, 132, and 136 each coordinate [4Fe-4S] cluster.

Belongs to the complex I 23 kDa subunit family. As to quaternary structure, NDH-1 is composed of 14 different subunits. Subunits NuoA, H, J, K, L, M, N constitute the membrane sector of the complex. Requires [4Fe-4S] cluster as cofactor.

It localises to the cell inner membrane. The catalysed reaction is a quinone + NADH + 5 H(+)(in) = a quinol + NAD(+) + 4 H(+)(out). Functionally, NDH-1 shuttles electrons from NADH, via FMN and iron-sulfur (Fe-S) centers, to quinones in the respiratory chain. The immediate electron acceptor for the enzyme in this species is believed to be ubiquinone. Couples the redox reaction to proton translocation (for every two electrons transferred, four hydrogen ions are translocated across the cytoplasmic membrane), and thus conserves the redox energy in a proton gradient. The protein is NADH-quinone oxidoreductase subunit I of Flavobacterium psychrophilum (strain ATCC 49511 / DSM 21280 / CIP 103535 / JIP02/86).